A 500-amino-acid chain; its full sequence is Aspartyl/glutamyl-tRNA(Asn/Gln) amidotransferase subunit B (500 aa).

It belongs to the GatB/GatE family. GatB subfamily. Heterotrimer of A, B and C subunits.

The enzyme catalyses L-glutamyl-tRNA(Gln) + L-glutamine + ATP + H2O = L-glutaminyl-tRNA(Gln) + L-glutamate + ADP + phosphate + H(+). The catalysed reaction is L-aspartyl-tRNA(Asn) + L-glutamine + ATP + H2O = L-asparaginyl-tRNA(Asn) + L-glutamate + ADP + phosphate + 2 H(+). Functionally, allows the formation of correctly charged Asn-tRNA(Asn) or Gln-tRNA(Gln) through the transamidation of misacylated Asp-tRNA(Asn) or Glu-tRNA(Gln) in organisms which lack either or both of asparaginyl-tRNA or glutaminyl-tRNA synthetases. The reaction takes place in the presence of glutamine and ATP through an activated phospho-Asp-tRNA(Asn) or phospho-Glu-tRNA(Gln). The chain is Aspartyl/glutamyl-tRNA(Asn/Gln) amidotransferase subunit B from Rhizobium meliloti (strain 1021) (Ensifer meliloti).